We begin with the raw amino-acid sequence, 557 residues long: Glucose-6-phosphate isomerase (557 aa).

Catalysis depends on E361, which acts as the Proton donor. Catalysis depends on residues H392 and K520.

Belongs to the GPI family.

The protein resides in the cytoplasm. The enzyme catalyses alpha-D-glucose 6-phosphate = beta-D-fructose 6-phosphate. It participates in carbohydrate biosynthesis; gluconeogenesis. The protein operates within carbohydrate degradation; glycolysis; D-glyceraldehyde 3-phosphate and glycerone phosphate from D-glucose: step 2/4. Catalyzes the reversible isomerization of glucose-6-phosphate to fructose-6-phosphate. The chain is Glucose-6-phosphate isomerase from Acinetobacter baylyi (strain ATCC 33305 / BD413 / ADP1).